Consider the following 690-residue polypeptide: MARSHPLEKYRNIGIMAHIDAGKTTTTERILYYTGKSYKIGEVHEGTATMDWMEQEQERGITITSAATTCFWNDHRINIIDTPGHVDFTIEVERSLRVLDGAVTAFDGVAGVEPQSETVWRQADKYRVPRMCYVNKLDRTGANFQRCVQMIKDRLGARPAVLYLPIGIESSFVGLVDLVENRAIVWLEESLGAKFEYRDIPDDMKDEAAVARQELIELAVEQDEAAMESYLEGNEPDVATLKALLRKGTLAFDFVPVLCGSSFKNKGVQPLLDAVVDYLPSPLDIPDVQGVKLDGETPDSRPAEDSAPMSALAFKIMNDPFVGSLTFARIYSGKLEKGTYLNSVKDKKEKIGRMLLMHANSREDIEEAYAGDIVALAGLKETTTGDTLCAPSAPIILERMEFPDPVIELSVEPKTKADQEKMGIALNRLAAEDPSFRVSSDHESGQTIIKGMGELHLEILVDRMKREFKVEANVGAPQVAYREYLKKPVELVYTHKKQSGGSGQFGEVKVQVKPGERGSGFVFVDEVKGGNIPREYIPSVEKGMRETAEGGSLIGFPIVDVEVHLIDGKYHDVDSSALAFEITGRGAMREAAQKAGITILEPIMKVEVVTPEDYLGDVIGDMNSRRGQIQGTDSRGNAQVVEAMVPLANMFGYVNQLRSFTQGRAQYSMQFSHYDEVPANVADEVKAKLA.

In terms of domain architecture, tr-type G spans 8–283 (EKYRNIGIMA…AVVDYLPSPL (276 aa)). GTP-binding positions include 17 to 24 (AHIDAGKT), 81 to 85 (DTPGH), and 135 to 138 (NKLD).

This sequence belongs to the TRAFAC class translation factor GTPase superfamily. Classic translation factor GTPase family. EF-G/EF-2 subfamily.

The protein localises to the cytoplasm. In terms of biological role, catalyzes the GTP-dependent ribosomal translocation step during translation elongation. During this step, the ribosome changes from the pre-translocational (PRE) to the post-translocational (POST) state as the newly formed A-site-bound peptidyl-tRNA and P-site-bound deacylated tRNA move to the P and E sites, respectively. Catalyzes the coordinated movement of the two tRNA molecules, the mRNA and conformational changes in the ribosome. The chain is Elongation factor G from Rhizorhabdus wittichii (strain DSM 6014 / CCUG 31198 / JCM 15750 / NBRC 105917 / EY 4224 / RW1) (Sphingomonas wittichii).